The following is a 394-amino-acid chain: Penicillopepsin-2 (394 aa).

The signal sequence occupies residues 1–20 (MVVFSKITVVLAGLATVASA). Residues 21 to 71 (VPTGTSRKSTFTVNQKARPVAQAKAINLPGMYASALSKYGAAVPASVKAAA) constitute a propeptide, activation peptide. The region spanning 87 to 391 (YLTPVNVGGT…DANGPRLGFA (305 aa)) is the Peptidase A1 domain. Residue Asp103 is part of the active site. Residue Asn132 is glycosylated (N-linked (GlcNAc...) asparagine). Residue Asp283 is part of the active site. An intrachain disulfide couples Cys319 to Cys354.

The protein belongs to the peptidase A1 family. As to quaternary structure, monomer.

The protein resides in the secreted. The catalysed reaction is Hydrolysis of proteins with broad specificity similar to that of pepsin A, preferring hydrophobic residues at P1 and P1', but also cleaving 20-Gly-|-Glu-21 in the B chain of insulin. Clots milk, and activates trypsinogen.. Secreted aspartic endopeptidase that allows assimilation of proteinaceous substrates. The scissile peptide bond is attacked by a nucleophilic water molecule activated by two aspartic residues in the active site. Shows a broad primary substrate specificity. Favors hydrophobic residues at the P1 and P1' positions, but can also activate trypsinogen and hydrolyze the B chain of insulin between positions 'Gly-20' and 'Glu-21'. This is Penicillopepsin-2 from Penicillium janthinellum (Penicillium vitale).